Consider the following 571-residue polypeptide: Probable pectinesterase/pectinesterase inhibitor 58 (571 aa).

The N-terminal stretch at 1-28 (MGVDGELKKKKCIIAGVITALLVLMVVA) is a signal peptide. 4 N-linked (GlcNAc...) asparagine glycosylation sites follow: asparagine 36, asparagine 91, asparagine 207, and asparagine 216. The pectinesterase inhibitor 58 stretch occupies residues 49 to 204 (KTATTAVEAV…RELTSNGLAM (156 aa)). Residues 259-556 (NVVVAHDGSG…FTPARFLRGN (298 aa)) are pectinesterase 58. Substrate is bound at residue threonine 335. N-linked (GlcNAc...) asparagine glycosylation is present at asparagine 347. Glutamine 365 contributes to the substrate binding site. The active-site Proton donor; for pectinesterase activity is the aspartate 388. Cysteine 402 and cysteine 422 are joined by a disulfide. Aspartate 409 (nucleophile; for pectinesterase activity) is an active-site residue. The substrate site is built by arginine 477 and tryptophan 479.

It in the N-terminal section; belongs to the PMEI family. In the C-terminal section; belongs to the pectinesterase family. In terms of tissue distribution, expressed in siliques, but not in flower buds.

Its subcellular location is the secreted. It is found in the cell wall. It catalyses the reaction [(1-&gt;4)-alpha-D-galacturonosyl methyl ester](n) + n H2O = [(1-&gt;4)-alpha-D-galacturonosyl](n) + n methanol + n H(+). Its pathway is glycan metabolism; pectin degradation; 2-dehydro-3-deoxy-D-gluconate from pectin: step 1/5. Acts in the modification of cell walls via demethylesterification of cell wall pectin. The protein is Probable pectinesterase/pectinesterase inhibitor 58 (PME58) of Arabidopsis thaliana (Mouse-ear cress).